The primary structure comprises 397 residues: CCA-adding enzyme (397 aa).

The ATP site is built by Gly-26 and Arg-29. Positions 26 and 29 each coordinate CTP. Mg(2+) contacts are provided by Asp-39 and Asp-41. Arg-110, Asp-153, Arg-156, Arg-159, and Arg-162 together coordinate ATP. CTP-binding residues include Arg-110, Asp-153, Arg-156, Arg-159, and Arg-162.

This sequence belongs to the tRNA nucleotidyltransferase/poly(A) polymerase family. Bacterial CCA-adding enzyme type 3 subfamily. Homodimer. Mg(2+) is required as a cofactor.

It carries out the reaction a tRNA precursor + 2 CTP + ATP = a tRNA with a 3' CCA end + 3 diphosphate. It catalyses the reaction a tRNA with a 3' CCA end + 2 CTP + ATP = a tRNA with a 3' CCACCA end + 3 diphosphate. In terms of biological role, catalyzes the addition and repair of the essential 3'-terminal CCA sequence in tRNAs without using a nucleic acid template. Adds these three nucleotides in the order of C, C, and A to the tRNA nucleotide-73, using CTP and ATP as substrates and producing inorganic pyrophosphate. tRNA 3'-terminal CCA addition is required both for tRNA processing and repair. Also involved in tRNA surveillance by mediating tandem CCA addition to generate a CCACCA at the 3' terminus of unstable tRNAs. While stable tRNAs receive only 3'-terminal CCA, unstable tRNAs are marked with CCACCA and rapidly degraded. The protein is CCA-adding enzyme of Bacillus cereus (strain B4264).